Consider the following 409-residue polypeptide: uncharacterized protein (409 aa).

Position 46 (His46) interacts with Zn(2+). Glu49 (proton acceptor) is an active-site residue. Zn(2+) is bound by residues His50 and Glu126.

Belongs to the peptidase M16 family. It depends on Zn(2+) as a cofactor.

This is an uncharacterized protein from Bacillus subtilis (strain 168).